The sequence spans 1427 residues: MAFRKENKTKSNFSKISIGLASPEEILENSSGEVLKPETINYRTYKPERDGLFCERIFGPIKDYECHCGKYKRIRYKGIVCDRCGVEVTEKKVRRERMGHIQLVVPVAHIWYFRSLPNKIGYLLGLPTKKLDSIIYYERYVVIQPGVKAEDGIAEYDLLSEEEYLDILDTLPKDNQYLEDNDPNKFIAKMGAEAIYDLLARLDLDALSYELRHRAGNDASQQRKNEALKRLQVVESFRASRGRNKPEWMIVRIVPVIPPELRPLVPLDGGRFATSDLNDLYRRVIIRNNRLKRLIEIKAPEVILRNEKRMLQESVDSLFDNSRKSSAVKTDANRPLKSLSDSLKGKQGRFRQNLLGKRVDYSARSVIVVGPELKMGECGIPKLMAAELYKPFIIRKLIERGIVKTVKSAKKIVDRKEAVIWDILEHVMKGHPVLLNRAPTLHRLGIQAFQPKMIEGKAIQLHPLACTAFNADFDGDQMAVHLPLSNEAILEAQMLMLQSHNILNPANGAPITVPAQDMVLGLYYITKLRAGAKGEGLTFYGPEEALIAYNEGKVDIHAPVKVIVKDVDENGNIVDVMRETSVGRVIVNEIVPPEAGYINTIISKKSLRDIISDVIKVCGVAKAADFLDGIKNLGYQMAFKGGLSFNLGDIIIPKEKETLVQKGYDEVEQVVNNYNMGFITNNERYNQVIDIWTHVNSELSNILMKTISSDDQGFNSVYMMLDSGARGSKEQIRQLSGMRGLMAKLQKAGAEGGQIIENPILSNFKEGLSVLEYFISTHGARKGLADTALKTADAGYLTRRLVDVSHDVIITEEDCGTLRGLVCTDLKNNDEVIATLYERILGRVSVHDIIHPTTGELLVAGGEEITEEVAKKIQDSPIESVEIRSVLTCEAKKGVCAKCYGRNLATSRMVQKGEAVGVIAAQSIGEPGTQLTLRTFHAGGTAANIAANASIVAKNSARLEFEELRTVDIVDEMGEAAKVVVGRLAEVRFVDVNTGIVLSTHNVPYGSTLYVSDGDLVEKGKLIAKWDPFNAVIITEATGKIEFEGVIENVTYKVESDEATGLREIIIIESKDKTKVPSAHILTEDGDLIRTYNLPVGGHVIIENGQKVKAGEVIVKIPRAVGKAGDITGGLPRVTELFEARNPSNPAVVSEIDGEVTMGKIKRGNREIIVTSKTGEVKKYLVALSKQILVQENDYVRAGTPLSDGATTPADILAIKGPTAVQEYIVNEVQDVYRLQGVKINDKHFEIIVRQMMRKVQIDEPGDTRFLEQQVVDKLEFMEENDRIWGKKVVVDAGDSQNMQPGQIVTARKLRDENSMLKRRDLKPVEVRDAVAATSTQILQGITRAALQTSSFMSAASFQETTKVLNEAAINGKTDKLEGMKENVICGHLIPAGTGQREFEKIIVGSKEEYDRILANKKTVLDYNEVE.

4 residues coordinate Zn(2+): cysteine 66, cysteine 68, cysteine 81, and cysteine 84. Mg(2+)-binding residues include aspartate 472, aspartate 474, and aspartate 476. Cysteine 815, cysteine 889, cysteine 896, and cysteine 899 together coordinate Zn(2+).

Belongs to the RNA polymerase beta' chain family. The RNAP catalytic core consists of 2 alpha, 1 beta, 1 beta' and 1 omega subunit. When a sigma factor is associated with the core the holoenzyme is formed, which can initiate transcription. The cofactor is Mg(2+). It depends on Zn(2+) as a cofactor.

It carries out the reaction RNA(n) + a ribonucleoside 5'-triphosphate = RNA(n+1) + diphosphate. Its function is as follows. DNA-dependent RNA polymerase catalyzes the transcription of DNA into RNA using the four ribonucleoside triphosphates as substrates. The polypeptide is DNA-directed RNA polymerase subunit beta' (Bacteroides thetaiotaomicron (strain ATCC 29148 / DSM 2079 / JCM 5827 / CCUG 10774 / NCTC 10582 / VPI-5482 / E50)).